We begin with the raw amino-acid sequence, 304 residues long: Energy-coupling factor transporter ATP-binding protein EcfA2 (304 aa).

Residues 11–260 (LKADEILAVS…QTFLEKTTIV (250 aa)) enclose the ABC transporter domain. Residue 54–61 (GDSGSGKS) coordinates ATP.

The protein belongs to the ABC transporter superfamily. Energy-coupling factor EcfA family. Forms a stable energy-coupling factor (ECF) transporter complex composed of 2 membrane-embedded substrate-binding proteins (S component), 2 ATP-binding proteins (A component) and 2 transmembrane proteins (T component).

Its subcellular location is the cell membrane. In terms of biological role, ATP-binding (A) component of a common energy-coupling factor (ECF) ABC-transporter complex. Unlike classic ABC transporters this ECF transporter provides the energy necessary to transport a number of different substrates. This is Energy-coupling factor transporter ATP-binding protein EcfA2 from Mycoplasma genitalium (strain ATCC 33530 / DSM 19775 / NCTC 10195 / G37) (Mycoplasmoides genitalium).